Consider the following 1147-residue polypeptide: PDZ domain-containing protein 8 (1147 aa).

A helical membrane pass occupies residues 2 to 24 (GLLLLILASAVLGSFLTLLAQFL). Residues 87–293 (APPTLETCYF…LPSYKIRFKP (207 aa)) form the SMP-LTD domain. In terms of domain architecture, PDZ spans 365–448 (TVELIKGNLQ…RVLVYYQRPA (84 aa)). A phosphoserine mark is found at Ser-490, Ser-515, and Ser-532. The disordered stretch occupies residues 504-673 (ELKEETQPLS…DSSDDPQMWE (170 aa)). Residues 510–524 (QPLSHSPKRTPTTLS) show a composition bias toward polar residues. Positions 557-576 (KPSTLKTSETTEAAQVSKPQ) are enriched in polar residues. The span at 580–596 (FKPPVPPRPQGRVPLPP) shows a compositional bias: pro residues. The Phorbol-ester/DAG-type zinc-finger motif lies at 833-884 (KHSFQDTQFQNPTWCDYCKKKVWTKAASQCMFCAYVCHKKCQEKCLAETPLC). The segment at 948–990 (RLSEPGTDLVEPSPKHTPNTSDNEGSDTEVCGSNSPSKRGNSA) is disordered. Ser-960 and Ser-973 each carry phosphoserine. Polar residues predominate over residues 978–987 (CGSNSPSKRG). The stretch at 1021-1056 (PTEERIQKLEFMLDKLQNEIDQELEHNNSLVREEKE) forms a coiled coil. The segment covering 1126–1137 (QLIDSQPFSNIS) has biased composition (polar residues). Residues 1126–1147 (QLIDSQPFSNISDDLFGPSESV) form a disordered region.

Interacts with MSN.

Its subcellular location is the endoplasmic reticulum membrane. Its function is as follows. Molecular tethering protein that connects endoplasmic reticulum and mitochondria membranes. PDZD8-dependent endoplasmic reticulum-mitochondria membrane tethering is essential for endoplasmic reticulum-mitochondria Ca(2+) transfer. In neurons, involved in the regulation of dendritic Ca(2+) dynamics by regulating mitochondrial Ca(2+) uptake in neurons. The sequence is that of PDZ domain-containing protein 8 from Mus musculus (Mouse).